The chain runs to 691 residues: Methionine--tRNA ligase (691 aa).

A 'HIGH' region motif is present at residues 12–22 (PYANGSFHIGH). Zn(2+) contacts are provided by cysteine 143, cysteine 146, cysteine 156, and cysteine 159. Residues 341 to 345 (KMSKS) carry the 'KMSKS' region motif. Lysine 344 is an ATP binding site. Positions 585 to 691 (DFVKVDLRIA…PGAQPGMRIH (107 aa)) constitute a tRNA-binding domain.

Belongs to the class-I aminoacyl-tRNA synthetase family. MetG type 1 subfamily. In terms of assembly, homodimer. Zn(2+) is required as a cofactor.

It is found in the cytoplasm. The catalysed reaction is tRNA(Met) + L-methionine + ATP = L-methionyl-tRNA(Met) + AMP + diphosphate. Is required not only for elongation of protein synthesis but also for the initiation of all mRNA translation through initiator tRNA(fMet) aminoacylation. The sequence is that of Methionine--tRNA ligase from Bordetella avium (strain 197N).